The primary structure comprises 90 residues: Sec-independent protein translocase protein TatA (90 aa).

Residues 1-21 (MGGASIWHWIVVGVIVMLLFG) traverse the membrane as a helical segment. The disordered stretch occupies residues 42–90 (GMADEDQPQAPVANQSPPPVSATEPVRTLPPHQGEPAPAANASVDRKVG).

Belongs to the TatA/E family. The Tat system comprises two distinct complexes: a TatABC complex, containing multiple copies of TatA, TatB and TatC subunits, and a separate TatA complex, containing only TatA subunits. Substrates initially bind to the TatABC complex, which probably triggers association of the separate TatA complex to form the active translocon.

The protein resides in the cell inner membrane. Its function is as follows. Part of the twin-arginine translocation (Tat) system that transports large folded proteins containing a characteristic twin-arginine motif in their signal peptide across membranes. TatA could form the protein-conducting channel of the Tat system. The sequence is that of Sec-independent protein translocase protein TatA from Methylobacterium nodulans (strain LMG 21967 / CNCM I-2342 / ORS 2060).